A 586-amino-acid chain; its full sequence is Kelch-like protein 7 (586 aa).

One can recognise a BTB domain in the interval Cys44 to Ser111. In terms of domain architecture, BACK spans Cys146–Gln248. Kelch repeat units lie at residues Arg294–Asn336, Val337–Gly382, Lys383–Gly430, Leu431–Asp481, Ile483–Ser528, and Val530–Asp575.

Homodimer. Component of the BCR(KLHL7) E3 ubiquitin ligase complex, at least composed of CUL3 and KLHL7 and RBX1. In terms of tissue distribution, widely expressed, with highest levels in adult and fetal heart, CNS and adult testis.

The protein localises to the nucleus. It localises to the cytoplasm. Its pathway is protein modification; protein ubiquitination. Its function is as follows. Substrate-specific adapter of a BCR (BTB-CUL3-RBX1) E3 ubiquitin ligase complex. The BCR(KLHL7) complex acts by mediating ubiquitination and subsequent degradation of substrate proteins. Probably mediates 'Lys-48'-linked ubiquitination. In Homo sapiens (Human), this protein is Kelch-like protein 7 (KLHL7).